A 364-amino-acid chain; its full sequence is Developmentally-regulated GTP-binding protein 2 (364 aa).

Residue K21 is modified to (3S)-3-hydroxylysine. Positions 63 to 288 constitute an OBG-type G domain; the sequence is ARVALIGFPS…LLEMLWEYLA (226 aa). GTP-binding positions include 69–76, 94–98, 115–118, 246–249, and 269–271; these read GFPSVGKS, FTTLT, DLPG, NKID, and SCG. Mg(2+) is bound by residues S76 and T96. The region spanning 288-363 is the TGS domain; that stretch reads ALTCIYTKKR…EHEDVIQIVK (76 aa).

Belongs to the TRAFAC class OBG-HflX-like GTPase superfamily. OBG GTPase family. As to quaternary structure, interacts with RWDD1; this interaction confers protection to polyubiquitination and proteolytic degradation. Interacts with JMJD7; this interaction is direct. Requires Mg(2+) as cofactor. Post-translationally, polyubiquitinated. In terms of processing, hydroxylated (with S stereochemistry) at C-3 of Lys-21 by JMJD7.

Its subcellular location is the nucleus. The protein localises to the cytoplasm. The enzyme catalyses GTP + H2O = GDP + phosphate + H(+). Its function is as follows. Catalyzes the conversion of GTP to GDP through hydrolysis of the gamma-phosphate bond in GTP. When hydroxylated at C-3 of 'Lys-21' by JMJD7, may bind to RNA and play a role in translation. This chain is Developmentally-regulated GTP-binding protein 2 (DRG2), found in Bos taurus (Bovine).